The primary structure comprises 467 residues: MNKGKIKQIIGSVLDIEFENGELPEIYNALEIEATVSGKREILIAEVQTHIGGKAIRAIALSSTDGLIRGQEVTNTGKPISVPVGDATLGRIFNVLGKTIDEGPAITVKETRPIHRPAPAFDELTSKTEVFETGIKVIDLLAPYIKGGKTGLFGGAGVGKTVLIQELINNIAKQHGGFSVFAGVGERTREGNDLWREMKESGVIDKTVLCYGQMNEPPGARLRVALSALTMAEHFRDSIGTDVLLFVDNIFRFSQAGSEVSALLGRMPSAVGYQPTLSTEMGALQERITSTKKGSITSVQAIYVPADDLTDPAPANAFAHLDATTVLSRAISDKGIYPAVDPLDSTSRVMNAQVLGEEHYTVAREVQRILQRYKDLQDIIAILGMDELSEDDKVLVARARKIEKFLSQPFHVAEVFTGAPGKYVKLADTVRSFKEVISGNYDHLPEQAFYMVGSIDDAIEKAKGYKG.

154–161 lines the ATP pocket; sequence GGAGVGKT.

The protein belongs to the ATPase alpha/beta chains family. As to quaternary structure, F-type ATPases have 2 components, CF(1) - the catalytic core - and CF(0) - the membrane proton channel. CF(1) has five subunits: alpha(3), beta(3), gamma(1), delta(1), epsilon(1). CF(0) has three main subunits: a(1), b(2) and c(9-12). The alpha and beta chains form an alternating ring which encloses part of the gamma chain. CF(1) is attached to CF(0) by a central stalk formed by the gamma and epsilon chains, while a peripheral stalk is formed by the delta and b chains.

Its subcellular location is the cell inner membrane. It catalyses the reaction ATP + H2O + 4 H(+)(in) = ADP + phosphate + 5 H(+)(out). Functionally, produces ATP from ADP in the presence of a proton gradient across the membrane. The catalytic sites are hosted primarily by the beta subunits. The protein is ATP synthase subunit beta of Leptospira borgpetersenii serovar Hardjo-bovis (strain JB197).